Reading from the N-terminus, the 473-residue chain is N-lysine methyltransferase SETD6 (473 aa).

The residue at position 39 (K39) is an N6-methylated lysine; by autocatalysis. Residues P60–G286 form the SET domain. A73 to Y75 provides a ligand contact to S-adenosyl-L-methionine. Position 122 (W122) interacts with substrate. Position 179 is an N6-methylated lysine; by autocatalysis (K179). Y223 contributes to the S-adenosyl-L-methionine binding site. Substrate contacts are provided by S224 and Q226. N251–H252 contributes to the S-adenosyl-L-methionine binding site. Residues Y262 and Y297 each contribute to the substrate site. Residue Y297 coordinates S-adenosyl-L-methionine. The residue at position 372 (K372) is an N6-methylated lysine; by autocatalysis.

The protein belongs to the class V-like SAM-binding methyltransferase superfamily. Histone-lysine methyltransferase family. SETD6 subfamily. Monomer, homodimer and homotrimer; these structures are stabilized in the presence of S-adenosyl-L-methionine (SAM). In terms of processing, automethylated; Lys-39 and Lys-179 serve as the major automethylation sites.

The protein localises to the nucleus. It carries out the reaction L-lysyl-[protein] + S-adenosyl-L-methionine = N(6)-methyl-L-lysyl-[protein] + S-adenosyl-L-homocysteine + H(+). The catalysed reaction is L-lysyl(8)-[histone H2AZ] + S-adenosyl-L-methionine = N(6)-methyl-L-lysyl(8)-[histone H2AZ] + S-adenosyl-L-homocysteine + H(+). With respect to regulation, activated by automethylation. Protein-lysine N-methyltransferase. Monomethylates 'Lys-310' of the RELA subunit of NF-kappa-B complex, leading to down-regulation of NF-kappa-B transcription factor activity. Monomethylates 'Lys-8' of H2AZ (H2AZK8me1). Required for the maintenance of embryonic stem cell self-renewal. Methylates PAK4. In Homo sapiens (Human), this protein is N-lysine methyltransferase SETD6.